The chain runs to 428 residues: MFEAVIADIQAREILDSRGYPTLHVKVTTSTGSVGEARVPSGASTGKKEALEFRDTDSPRYQGKGVLQAVKNVKEILFPLVKGCSVYEQSLIDSLMMDSDGSPNKETLGANAILGVSLATAHAAAATLRRPLYRYLGGCFACSLPCPMMNLINGGMHADNGLGFQEFMIRPIGASSIKEAVNMGADVFHTLKKLLHERGLSTGVGDEGGFAPNLASNEEALELLLLAIEKAGFTPGKDISLALDCAASSFYNVKTGTYDGRHYEEQIAILSNLCDRYPIDSIEDGLAEEDYDGWALLTEVLGEKVQIVGDDLFVTNPELILEGISNGLANSVLIKPNQIGTLTETVYAIKLAQMAGYTTIISHRSGETTDTTIADLAVAFNAGQIKTGSLSRSERVAKYNRLMEIEEELGSEAIFTDSNVFSYEDSEE.

Residue glutamine 165 coordinates (2R)-2-phosphoglycerate. Catalysis depends on glutamate 207, which acts as the Proton donor. Residues aspartate 244, glutamate 283, and aspartate 310 each coordinate Mg(2+). The (2R)-2-phosphoglycerate site is built by lysine 335, arginine 364, serine 365, and lysine 386. Lysine 335 acts as the Proton acceptor in catalysis.

This sequence belongs to the enolase family. The cofactor is Mg(2+).

It localises to the cytoplasm. Its subcellular location is the secreted. The protein localises to the cell surface. The catalysed reaction is (2R)-2-phosphoglycerate = phosphoenolpyruvate + H2O. The protein operates within carbohydrate degradation; glycolysis; pyruvate from D-glyceraldehyde 3-phosphate: step 4/5. Its function is as follows. Catalyzes the reversible conversion of 2-phosphoglycerate (2-PG) into phosphoenolpyruvate (PEP). It is essential for the degradation of carbohydrates via glycolysis. This chain is Enolase, found in Chlamydia pneumoniae (Chlamydophila pneumoniae).